The primary structure comprises 79 residues: UPF0291 protein BH2353 (79 aa).

A disordered region spans residues G57 to H79. Residues T63 to H79 show a composition bias toward basic and acidic residues.

Belongs to the UPF0291 family.

The protein resides in the cytoplasm. The sequence is that of UPF0291 protein BH2353 from Halalkalibacterium halodurans (strain ATCC BAA-125 / DSM 18197 / FERM 7344 / JCM 9153 / C-125) (Bacillus halodurans).